The chain runs to 135 residues: Large ribosomal subunit protein bL17 (135 aa).

The protein belongs to the bacterial ribosomal protein bL17 family. Part of the 50S ribosomal subunit. Contacts protein L32.

This chain is Large ribosomal subunit protein bL17, found in Listeria innocua serovar 6a (strain ATCC BAA-680 / CLIP 11262).